A 522-amino-acid chain; its full sequence is Maturase K (522 aa).

This sequence belongs to the intron maturase 2 family. MatK subfamily.

Its subcellular location is the plastid. The protein resides in the chloroplast. Usually encoded in the trnK tRNA gene intron. Probably assists in splicing its own and other chloroplast group II introns. The polypeptide is Maturase K (Iris tenax (Oregon iris)).